A 319-amino-acid polypeptide reads, in one-letter code: Protoheme IX farnesyltransferase (319 aa).

9 helical membrane-spanning segments follow: residues valine 34 to asparagine 54, proline 55 to leucine 75, isoleucine 95 to phenylalanine 115, isoleucine 119 to tyrosine 139, isoleucine 155 to glycine 175, valine 182 to phenylalanine 202, valine 221 to valine 241, phenylalanine 244 to valine 264, and isoleucine 291 to methionine 311.

This sequence belongs to the UbiA prenyltransferase family. Protoheme IX farnesyltransferase subfamily.

It is found in the cell inner membrane. It carries out the reaction heme b + (2E,6E)-farnesyl diphosphate + H2O = Fe(II)-heme o + diphosphate. It functions in the pathway porphyrin-containing compound metabolism; heme O biosynthesis; heme O from protoheme: step 1/1. In terms of biological role, converts heme B (protoheme IX) to heme O by substitution of the vinyl group on carbon 2 of heme B porphyrin ring with a hydroxyethyl farnesyl side group. The sequence is that of Protoheme IX farnesyltransferase from Rhizobium rhizogenes (strain K84 / ATCC BAA-868) (Agrobacterium radiobacter).